A 100-amino-acid polypeptide reads, in one-letter code: uncharacterized protein (100 aa).

Residues aspartate 65 to proline 91 show a composition bias toward basic and acidic residues. The tract at residues aspartate 65–lysine 100 is disordered.

The protein belongs to the chlamydial CPn_0121/CT_031/TC_0300 family.

This is an uncharacterized protein from Chlamydia trachomatis serovar D (strain ATCC VR-885 / DSM 19411 / UW-3/Cx).